A 378-amino-acid polypeptide reads, in one-letter code: Microtubule-associated protein 6 homolog (378 aa).

Positions 36-111 are disordered; sequence VTDGAQPPPP…YQPSEAPLER (76 aa). Residues 52 to 62 are compositionally biased toward polar residues; the sequence is IETQPSLSDPY. Mn stretches follow at residues 79-99 and 112-135; these read SVMR…CKPR and ETQY…WIPK. Composition is skewed to basic and acidic residues over residues 203–220, 242–252, 265–274, and 306–315; these read KRES…RATR, NEFRPWTDVKP, PEEKVVHETS, and PSKESSKVEK. The interval 203–378 is disordered; sequence KRESFMPKLP…INNKLAEAKE (176 aa). The interval 237 to 260 is mn 3; the sequence is GTSYRNEFRPWTDVKPVKPIKAKS. Over residues 322-337 the composition is skewed to basic residues; sequence KPKKTSTSHKPVKKAK. The segment covering 359–378 has biased composition (basic and acidic residues); that stretch reads KPEEKEKSKEINNKLAEAKE.

It belongs to the STOP family.

The protein localises to the cytoplasm. It localises to the cytoskeleton. Involved in microtubule stabilization in many cell types, including neuronal cells. Specifically has microtubule cold stabilizing activity. Involved in dendrite morphogenesis and maintenance by regulating lysosomal trafficking. The sequence is that of Microtubule-associated protein 6 homolog (map6) from Xenopus tropicalis (Western clawed frog).